Reading from the N-terminus, the 113-residue chain is Ig kappa chain V-II region 7S34.1 (113 aa).

The interval 1–23 (DIVMTQTAPSALVTPGESVSISC) is framework-1. Cysteines 23 and 93 form a disulfide. The complementarity-determining-1 stretch occupies residues 24 to 39 (RSSKSLLHSNGNTYLY). A framework-2 region spans residues 40-54 (WFLQRPGQCPQLLIY). A complementarity-determining-2 region spans residues 55 to 61 (RMSNLAS). The segment at 62 to 93 (GVPDRFSGSGSGTAFTLRISRVEAEDVGVYYC) is framework-3. Residues 94–102 (MQQREYPYT) are complementarity-determining-3. The interval 103–112 (FGGGTKLEIK) is framework-4.

This chain is Ig kappa chain V-II region 7S34.1, found in Mus musculus (Mouse).